We begin with the raw amino-acid sequence, 505 residues long: Prenylcysteine oxidase 1 (505 aa).

Positions 1-27 (MGRVVAELVSSLLGLWLLLCSCGCPEG) are cleaved as a signal peptide. N-linked (GlcNAc...) asparagine glycosylation is found at Asn-196, Asn-323, and Asn-353.

The protein belongs to the prenylcysteine oxidase family. It depends on FAD as a cofactor. In terms of tissue distribution, widely expressed.

The protein localises to the lysosome. The enzyme catalyses an S-polyprenyl-L-cysteine + O2 + H2O = a polyprenal + L-cysteine + H2O2. It carries out the reaction S-(2E,6E)-farnesyl-L-cysteine + O2 + H2O = (2E,6E)-farnesal + L-cysteine + H2O2. It catalyses the reaction [(2E,6E,10E)-geranylgeranyl]-L-cysteine + O2 + H2O = (2E,6E,10E)-geranylgeranial + L-cysteine + H2O2. Functionally, prenylcysteine oxidase that cleaves the thioether bond of prenyl-L-cysteines, such as farnesylcysteine and geranylgeranylcysteine. Only active against free prenylcysteines and not prenylcysteine residues within prenylated proteins or peptides. Involved in the final step in the degradation of prenylated proteins, by degrading prenylcysteines after the protein has been degraded. The polypeptide is Prenylcysteine oxidase 1 (Homo sapiens (Human)).